Reading from the N-terminus, the 359-residue chain is UDP-N-acetylglucosamine--N-acetylmuramyl-(pentapeptide) pyrophosphoryl-undecaprenol N-acetylglucosamine transferase (359 aa).

Residues 14 to 16 (TGG), Asn-126, Arg-166, Ser-194, Ile-248, and Gln-293 contribute to the UDP-N-acetyl-alpha-D-glucosamine site.

This sequence belongs to the glycosyltransferase 28 family. MurG subfamily.

It is found in the cell inner membrane. The catalysed reaction is di-trans,octa-cis-undecaprenyl diphospho-N-acetyl-alpha-D-muramoyl-L-alanyl-D-glutamyl-meso-2,6-diaminopimeloyl-D-alanyl-D-alanine + UDP-N-acetyl-alpha-D-glucosamine = di-trans,octa-cis-undecaprenyl diphospho-[N-acetyl-alpha-D-glucosaminyl-(1-&gt;4)]-N-acetyl-alpha-D-muramoyl-L-alanyl-D-glutamyl-meso-2,6-diaminopimeloyl-D-alanyl-D-alanine + UDP + H(+). It functions in the pathway cell wall biogenesis; peptidoglycan biosynthesis. In terms of biological role, cell wall formation. Catalyzes the transfer of a GlcNAc subunit on undecaprenyl-pyrophosphoryl-MurNAc-pentapeptide (lipid intermediate I) to form undecaprenyl-pyrophosphoryl-MurNAc-(pentapeptide)GlcNAc (lipid intermediate II). The polypeptide is UDP-N-acetylglucosamine--N-acetylmuramyl-(pentapeptide) pyrophosphoryl-undecaprenol N-acetylglucosamine transferase (Verminephrobacter eiseniae (strain EF01-2)).